Consider the following 542-residue polypeptide: Chaperonin GroEL 3 (542 aa).

ATP-binding positions include T30 to P33, K51, D87 to T91, G415, and D496.

The protein belongs to the chaperonin (HSP60) family. In terms of assembly, forms a cylinder of 14 subunits composed of two heptameric rings stacked back-to-back. Interacts with the co-chaperonin GroES.

The protein resides in the cytoplasm. The catalysed reaction is ATP + H2O + a folded polypeptide = ADP + phosphate + an unfolded polypeptide.. Functionally, together with its co-chaperonin GroES, plays an essential role in assisting protein folding. The GroEL-GroES system forms a nano-cage that allows encapsulation of the non-native substrate proteins and provides a physical environment optimized to promote and accelerate protein folding. In Sinorhizobium medicae (strain WSM419) (Ensifer medicae), this protein is Chaperonin GroEL 3.